Here is a 415-residue protein sequence, read N- to C-terminus: MSTRRVVVDAPAGASSSMPLQRHKASFRAAQSPSSLDGLPASRTVAVSGLVRTPRVYVGMAPSGPTGGLGARVTRRALGISSVFLQGLRSSGLATAPAPSLERDLGAVEDLGGCLVEYMAKVHALEKVSQELEAQLRMHLESKATRSENWGALRASWASSCQQVGEAVLENARLMLQTENIQAGADDFKERYENEQPFRKAAEEEINSLYKVIDEANSSKMDLESQIESLKEELGFLSRSYEEDVKMLYKQLAGSELEQLNVPIGTGLDDILETIRIHWERDVEKNRLQAGALLQAKQQAELARRAQTQEEKLAAALRVELHNTSCQIQSLQAETESLRALKRGLENTLHDAKHWHDIELQNLGAVVSRLEAELREMRAEAEQQLQAREHLLSHKCQLQRDVASYHALLDREESS.

The tract at residues 1-26 (MSTRRVVVDAPAGASSSMPLQRHKAS) is disordered. An N-acetylserine modification is found at Ser-2. Positions 2 to 114 (STRRVVVDAP…LGAVEDLGGC (113 aa)) are head. 3 positions are modified to phosphoserine: Ser-26, Ser-32, and Ser-35. A Phosphothreonine modification is found at Thr-53. Residues Ser-90 and Ser-100 each carry the phosphoserine modification. An IF rod domain is found at 104-415 (DLGAVEDLGG…HALLDREESS (312 aa)). Coiled-coil stretches lie at residues 115–144 (LVEYMAKVHALEKVSQELEAQLRMHLESKA), 199–248 (RKAA…VKML), and 295–395 (QAKQ…LSHK). The tract at residues 396-415 (CQLQRDVASYHALLDREESS) is tail.

Belongs to the intermediate filament family. As to quaternary structure, part of a complex required for lens intermediate filament formation composed of BFSP1, BFSP2 and CRYAA. Found in a complex composed of PPL (via C-terminal linker domain), BFSP1 and BFSP2 in the retinal lens. Within the complex interacts with PPL (via C-terminal linker domain) and with BFSP1. Identified in a complex that contains VIM, EZR, AHNAK, BFSP1, BFSP2, ANK2, PLEC, PRX and spectrin. Interacts with LGSN. Interacts with VIM. As to expression, abundantly expressed in both the inner and outer cortex of the retina, expressed at a lower level in the nucleus of the retina (at protein level). Detected in eye lens fiber cells (at protein level).

It is found in the cell membrane. Its subcellular location is the cytoplasm. The protein localises to the cytoskeleton. The protein resides in the cell cortex. In terms of biological role, required for the correct formation of lens intermediate filaments as part of a complex composed of BFSP1, BFSP2 and CRYAA. Plays a role in maintenance of retinal lens optical clarity. The chain is Phakinin (BFSP2) from Bos taurus (Bovine).